The chain runs to 535 residues: MSVTTFCSLKKTDKCNIYISKRAFSVFLFYLFFFLFFHFYFLCSSSFAVIIHESEKRKNIMRRKRSILQIFENSIKSKEGKCNFTKRYITHYYNIPLKIKKHDLPSVIKYFSHKPNGKHNYVTNMITQKNRKSFLFFFFLYNKYFFGKQEQIRKMNYHEEMNKINIKNDGNRKIYMYPKNDIHEEDGDHKNDVEINQKRNEQNCKSFNDEKNENARDPNKILYLINPRGFCKGVSRAIETVEECLKLFKPPIYVKHKIVHNDIVCKKLEKEGAIFIEDLNDVPDGHILIYSAHGISPQIREIAKKKKLIEIDATCPLVNKVHVYVQMKAKENYDIILIGYKNHVEVIGTYNEAPHCTHIVENVNDVDKLNFPLNKKLFYVTQTTLSMDDCALIVQKLKNKFPHIETIPSGSICYATTNRQTALNKICTKCDLTIVVGSSSSSNAKKLVYSSQIRNVPAVLLNTVHDLDQQILKNVNKIALTSAASTPEQETQKFVNLLTNPPFNYTLQNFDGAHENVPKWKLPKNLLHMIKEREK.

A [4Fe-4S] cluster-binding site is contributed by Cys-231. Positions 260 and 293 each coordinate (2E)-4-hydroxy-3-methylbut-2-enyl diphosphate. Positions 260 and 293 each coordinate dimethylallyl diphosphate. 2 residues coordinate isopentenyl diphosphate: His-260 and His-293. Cys-315 provides a ligand contact to [4Fe-4S] cluster. His-343 contributes to the (2E)-4-hydroxy-3-methylbut-2-enyl diphosphate binding site. His-343 is a dimethylallyl diphosphate binding site. His-343 contributes to the isopentenyl diphosphate binding site. Residue Glu-345 is the Proton donor of the active site. Residue Thr-383 participates in (2E)-4-hydroxy-3-methylbut-2-enyl diphosphate binding. Cys-413 is a [4Fe-4S] cluster binding site. Residues Ser-441, Ser-442, Asn-443, and Ser-485 each contribute to the (2E)-4-hydroxy-3-methylbut-2-enyl diphosphate site. Positions 441, 442, 443, and 485 each coordinate dimethylallyl diphosphate. 4 residues coordinate isopentenyl diphosphate: Ser-441, Ser-442, Asn-443, and Ser-485.

The protein belongs to the IspH family. Interacts with Fd/ferredoxin. [4Fe-4S] cluster is required as a cofactor.

It is found in the plastid. Its subcellular location is the apicoplast. It catalyses the reaction dimethylallyl diphosphate + 2 oxidized [2Fe-2S]-[ferredoxin] + H2O = (2E)-4-hydroxy-3-methylbut-2-enyl diphosphate + 2 reduced [2Fe-2S]-[ferredoxin] + 2 H(+). The enzyme catalyses isopentenyl diphosphate + 2 oxidized [2Fe-2S]-[ferredoxin] + H2O = (2E)-4-hydroxy-3-methylbut-2-enyl diphosphate + 2 reduced [2Fe-2S]-[ferredoxin] + 2 H(+). Its pathway is isoprenoid biosynthesis; dimethylallyl diphosphate biosynthesis; dimethylallyl diphosphate from (2E)-4-hydroxy-3-methylbutenyl diphosphate: step 1/1. It functions in the pathway isoprenoid biosynthesis; isopentenyl diphosphate biosynthesis via DXP pathway; isopentenyl diphosphate from 1-deoxy-D-xylulose 5-phosphate: step 6/6. Functionally, catalyzes the conversion of 1-hydroxy-2-methyl-2-(E)-butenyl 4-diphosphate (HMBPP) into a mixture of isopentenyl diphosphate (IPP) and dimethylallyl diphosphate (DMAPP). Acts in the terminal step of the DOXP/MEP pathway for isoprenoid precursor biosynthesis. The polypeptide is 4-hydroxy-3-methylbut-2-enyl diphosphate reductase, apicoplast (Plasmodium falciparum (isolate 3D7)).